The sequence spans 394 residues: Growth-regulating factor 4 (394 aa).

The region spanning 64–99 (PFTAAQYEELEQQALIYKYLVAGVPVPPDLVLPIRR) is the QLQ domain. In terms of domain architecture, WRC spans 125-169 (DPEPGRCRRTDGKKWRCSKEAAPDSKYCERHMHRGRNRSRKPVET). Short sequence motifs (bipartite nuclear localization signal) lie at residues 130–140 (RCRRTDGKKWR) and 158–165 (RGRNRSRK). The segment at 156–180 (MHRGRNRSRKPVETQLVAQSQPPSS) is disordered. Over residues 170–180 (QLVAQSQPPSS) the composition is skewed to low complexity.

It belongs to the GRF family. As to quaternary structure, interacts with GIF1. Interacts with GSK2. Expressed in stems. Expressed in panicles.

It is found in the nucleus. Its activity is regulated as follows. Transactivation activity is repressed by GSK2. Its function is as follows. Transcription activator that plays a role in the regulation of meristematic function in leaves, stems and inflorescences. Transcription activator that plays a regulatory role in grain development. Positively regulates grain size by promoting cell division and expansion, leading to increased grain length and width. Positively regulates the expression of genes promoting cell proliferation. Activates the expression of expansin genes to promote cell expansion and grain size. May promote grain size by activating brassinosteroid responses. Component of a network formed by the microRNA396 (miRNA396), the GRFs and their interacting factors (GIFs) acting in the regulation of meristem function, at least partially through the control of cell proliferation. Component of the miRNA396c-GRF4-GIF1 regulatory module that plays an important role in grain size determination. This chain is Growth-regulating factor 4, found in Oryza sativa subsp. japonica (Rice).